A 211-amino-acid chain; its full sequence is ATP phosphoribosyltransferase (211 aa).

Belongs to the ATP phosphoribosyltransferase family. Short subfamily. Heteromultimer composed of HisG and HisZ subunits.

The protein resides in the cytoplasm. The enzyme catalyses 1-(5-phospho-beta-D-ribosyl)-ATP + diphosphate = 5-phospho-alpha-D-ribose 1-diphosphate + ATP. It functions in the pathway amino-acid biosynthesis; L-histidine biosynthesis; L-histidine from 5-phospho-alpha-D-ribose 1-diphosphate: step 1/9. In terms of biological role, catalyzes the condensation of ATP and 5-phosphoribose 1-diphosphate to form N'-(5'-phosphoribosyl)-ATP (PR-ATP). Has a crucial role in the pathway because the rate of histidine biosynthesis seems to be controlled primarily by regulation of HisG enzymatic activity. This is ATP phosphoribosyltransferase from Lacticaseibacillus paracasei (strain ATCC 334 / BCRC 17002 / CCUG 31169 / CIP 107868 / KCTC 3260 / NRRL B-441) (Lactobacillus paracasei).